The chain runs to 468 residues: Bone morphogenetic protein 3 (468 aa).

A signal peptide spans 1-22; it reads MAGARGLLCLWLGYFCLNLAQG. Positions 23 to 358 are excised as a propeptide; sequence QRPNLHLPGL…EQTLKKARRK (336 aa). Residues 29–53 form a disordered region; that stretch reads LPGLRETEPSDRATGGSPSPDLRPH. Residues asparagine 115, asparagine 139, asparagine 171, and asparagine 216 are each glycosylated (N-linked (GlcNAc...) asparagine). The disordered stretch occupies residues 314 to 349; that stretch reads RKPYKSLQTQPPEKSRNKKKQRKGSHQKGQTLQFDE. Over residues 329 to 339 the composition is skewed to basic residues; it reads RNKKKQRKGSH. Positions 340-349 are enriched in polar residues; the sequence is QKGQTLQFDE. 3 cysteine pairs are disulfide-bonded: cysteine 366/cysteine 433, cysteine 395/cysteine 465, and cysteine 399/cysteine 467. N-linked (GlcNAc...) asparagine glycosylation is present at asparagine 459.

This sequence belongs to the TGF-beta family. In terms of assembly, homodimer; disulfide-linked.

Its subcellular location is the secreted. Its function is as follows. Negatively regulates bone density. Antagonizes the ability of certain osteogenic BMPs to induce osteoprogenitor differentiation and ossification. This Mus musculus (Mouse) protein is Bone morphogenetic protein 3 (Bmp3).